Here is a 303-residue protein sequence, read N- to C-terminus: Glutathione transport system permease protein GsiD (303 aa).

A run of 7 helical transmembrane segments spans residues 37–57, 105–125, 144–164, 165–185, 208–228, 230–250, and 266–286; these read QHVALVAGGFVLALILVAIFA, LAAGVFAVFIGAIIGTVLGLL, LFAFPGILLAIAVVAVLGSGI, ANVIVAVAIFSIPAFARLVRG, TILFSHILPGTVSSIVVFFTM, IGTSIISAASLSFLGLGAQPP, and VIAPHVALFPAVAIFLTVLAF. In terms of domain architecture, ABC transmembrane type-1 spans 101-290; that stretch reads AQISLAAGVF…LTVLAFNLLG (190 aa).

It belongs to the binding-protein-dependent transport system permease family. The complex is composed of two ATP-binding proteins (GsiA), two transmembrane proteins (GsiC and GsiD) and a solute-binding protein (GsiB).

It is found in the cell inner membrane. Functionally, part of the ABC transporter complex GsiABCD involved in glutathione import. Probably responsible for the translocation of the substrate across the membrane. The polypeptide is Glutathione transport system permease protein GsiD (Salmonella paratyphi A (strain ATCC 9150 / SARB42)).